Consider the following 115-residue polypeptide: Nitrogenase-stabilizing/protective protein NifW (115 aa).

Belongs to the NifW family. In terms of assembly, homotrimer; associates with NifD.

May protect the nitrogenase Fe-Mo protein from oxidative damage. The chain is Nitrogenase-stabilizing/protective protein NifW from Methylobacterium sp. (strain 4-46).